The following is a 628-amino-acid chain: Probable potassium transport system protein Kup (628 aa).

12 helical membrane passes run 20–40 (ALLT…SPLY), 63–83 (IISM…VMLV), 110–130 (FVAV…VITP), 151–171 (FILP…PLGT), 178–198 (FGPI…PQII), 212–232 (ALGL…AVVL), 256–276 (WFCV…ALVI), 296–316 (IPLV…VISG), 346–366 (IYMP…VLVF), 375–395 (AYGL…LIYV), 398–418 (TWWK…LLFA), and 422–442 (TKIH…IVVM).

It belongs to the HAK/KUP transporter (TC 2.A.72) family.

It localises to the cell membrane. It carries out the reaction K(+)(in) + H(+)(in) = K(+)(out) + H(+)(out). In terms of biological role, transport of potassium into the cell. Likely operates as a K(+):H(+) symporter. This is Probable potassium transport system protein Kup from Corynebacterium glutamicum (strain R).